The sequence spans 377 residues: UPF0754 membrane protein lmo2224 (377 aa).

The next 2 helical transmembrane spans lie at 1–21 (MSVLFTILLMAVIGGFIGAMT) and 357–377 (YLGGILGGFIGIIQGILAMWI).

This sequence belongs to the UPF0754 family.

The protein localises to the cell membrane. The protein is UPF0754 membrane protein lmo2224 of Listeria monocytogenes serovar 1/2a (strain ATCC BAA-679 / EGD-e).